Consider the following 213-residue polypeptide: Anti-sigma-W factor RsiW (213 aa).

The Cytoplasmic portion of the chain corresponds to 1–86 (MSCEQHYRTL…TNRFKVWMRR (86 aa)). Histidine 30, cysteine 34, and cysteine 37 together coordinate Zn(2+). The chain crosses the membrane as a helical span at residues 87-109 (YPLAVAAAVFVLLMSTSLFSMWS). The Extracellular portion of the chain corresponds to 110–213 (SDGEHVTVTG…ISDEKNSPSS (104 aa)).

Belongs to the zinc-associated anti-sigma factor (ZAS) superfamily. Anti-sigma-W factor family. Zn(2+) serves as cofactor. Post-translationally, is processed by three successive proteolytic events. First, the extracellular region of RsiW is cleaved by PrsW (Site-1 cleavage) in response to cell envelope stresses. Next, it undergoes cleavage at an intramembrane site (Site-2 cleavage) mediated by RasP. This cleavage uncovers a cryptic proteolytic tag with conserved alanine residues in the transmembrane segment, that is recognized mainly by the ClpXP protease, which completely degrades the protein in the cytoplasm and leads to the induction of the sigma-W-controlled genes.

It is found in the membrane. Is the anti-sigma factor for SigW. The presence of RsiW leads to the inactivation of SigW, and its proteolytic destruction to sigma-W activation. The polypeptide is Anti-sigma-W factor RsiW (rsiW) (Halalkalibacterium halodurans (strain ATCC BAA-125 / DSM 18197 / FERM 7344 / JCM 9153 / C-125) (Bacillus halodurans)).